The sequence spans 192 residues: MPKYYCEYCDIYLTHSSPVGRRQHNQGRKHISAKIEYFQNLLREEGITPQNFLGFLGSQAYNNILSNPMMNNFMHGNYNGYMKYNPMRNYHHSNRNPNYQHSVGMHNNKYSRAGYVPPGANKYPNNNFHNNKRISNTPKPYNNYTNKPITNSPYKNDKQDYRNNNENSNNFSNYQMNKDNSNFVNKNSEQPN.

The segment at 4–36 (YYCEYCDIYLTHSSPVGRRQHNQGRKHISAKIE) adopts a Matrin-type zinc-finger fold. The interval 118 to 192 (PGANKYPNNN…FVNKNSEQPN (75 aa)) is disordered. The span at 133 to 154 (RISNTPKPYNNYTNKPITNSPY) shows a compositional bias: polar residues. Positions 164-173 (NNENSNNFSN) are enriched in low complexity. Over residues 174–192 (YQMNKDNSNFVNKNSEQPN) the composition is skewed to polar residues.

This sequence belongs to the U1 small nuclear ribonucleoprotein C family. As to quaternary structure, U1 snRNP is composed of the 7 core Sm proteins B/B', D1, D2, D3, E, F and G that assemble in a heptameric protein ring on the Sm site of the small nuclear RNA to form the core snRNP, and at least 3 U1 snRNP-specific proteins U1-70K, U1-A and U1-C. U1-C interacts with U1 snRNA and the 5' splice-site region of the pre-mRNA.

It localises to the nucleus. In terms of biological role, component of the spliceosomal U1 snRNP, which is essential for recognition of the pre-mRNA 5' splice-site and the subsequent assembly of the spliceosome. U1-C is directly involved in initial 5' splice-site recognition for both constitutive and regulated alternative splicing. The interaction with the 5' splice-site seems to precede base-pairing between the pre-mRNA and the U1 snRNA. Stimulates commitment or early (E) complex formation by stabilizing the base pairing of the 5' end of the U1 snRNA and the 5' splice-site region. This is U1 small nuclear ribonucleoprotein C from Plasmodium chabaudi chabaudi.